The following is a 217-amino-acid chain: Large ribosomal subunit protein uL1 (217 aa).

Belongs to the universal ribosomal protein uL1 family. Part of the 50S ribosomal subunit.

Binds directly to 23S rRNA. Probably involved in E site tRNA release. In terms of biological role, protein L1 is also a translational repressor protein, it controls the translation of its operon by binding to its mRNA. The chain is Large ribosomal subunit protein uL1 from Hyperthermus butylicus (strain DSM 5456 / JCM 9403 / PLM1-5).